A 307-amino-acid chain; its full sequence is Probable RuBisCO transcriptional regulator (307 aa).

Residues 4–61 form the HTH lysR-type domain; sequence FTLQQLRILKAVATEKNFTKAAELLYLSQPSLSKQIKTLEKNLDILLVNRENNKISLT. The H-T-H motif DNA-binding region spans 21-40; sequence FTKAAELLYLSQPSLSKQIK.

The protein belongs to the LysR transcriptional regulatory family.

The protein localises to the plastid. It is found in the chloroplast. Trans-acting transcriptional regulator of RuBisCO genes (rbcL and rbcS) expression. The polypeptide is Probable RuBisCO transcriptional regulator (rbcR) (Phaeodactylum tricornutum (strain CCAP 1055/1)).